The following is a 33-amino-acid chain: Protamine (33 aa).

The disordered stretch occupies residues 1–33; it reads MPRRRRSSSRPVRRRRRPRVSRRRRRRGGRRRR.

Testis.

It is found in the nucleus. Its subcellular location is the chromosome. Its function is as follows. Protamines substitute for histones in the chromatin of sperm during the haploid phase of spermatogenesis. They compact sperm DNA into a highly condensed, stable and inactive complex. The polypeptide is Protamine (Oncorhynchus keta (Chum salmon)).